A 215-amino-acid chain; its full sequence is MVLRSEILTKKSELPTPDQALPGRESAMPVPEAHFVNGRPLTAPFPAGLQQVLFGMGCFWGAERRLWQQPGVWVTAVGYAGGYTPNPTYDEVCSGLTGHSEVVLVVYNPQETSFEQLLKVFWEAHDPTQGMRQGGDIGTQYRSVIYTFDAAQKAAALASRESFQAELAKAGYDRITTEIADVPPFYYAEAYHQQYLAKNPNGYCGLGGTGVCLPA.

The active site involves cysteine 58.

It belongs to the MsrA Met sulfoxide reductase family.

The enzyme catalyses L-methionyl-[protein] + [thioredoxin]-disulfide + H2O = L-methionyl-(S)-S-oxide-[protein] + [thioredoxin]-dithiol. It catalyses the reaction [thioredoxin]-disulfide + L-methionine + H2O = L-methionine (S)-S-oxide + [thioredoxin]-dithiol. Functionally, has an important function as a repair enzyme for proteins that have been inactivated by oxidation. Catalyzes the reversible oxidation-reduction of methionine sulfoxide in proteins to methionine. This is Peptide methionine sulfoxide reductase MsrA from Pseudomonas aeruginosa (strain LESB58).